A 544-amino-acid polypeptide reads, in one-letter code: Chaperonin GroEL 1 (544 aa).

ATP is bound by residues 30-33, lysine 51, 87-91, glycine 415, 481-483, and aspartate 497; these read TLGP, DGTTT, and DAL.

Belongs to the chaperonin (HSP60) family. As to quaternary structure, forms a cylinder of 14 subunits composed of two heptameric rings stacked back-to-back. Interacts with the co-chaperonin GroES.

The protein resides in the cytoplasm. It carries out the reaction ATP + H2O + a folded polypeptide = ADP + phosphate + an unfolded polypeptide.. In terms of biological role, together with its co-chaperonin GroES, plays an essential role in assisting protein folding. The GroEL-GroES system forms a nano-cage that allows encapsulation of the non-native substrate proteins and provides a physical environment optimized to promote and accelerate protein folding. This is Chaperonin GroEL 1 from Chlamydia pneumoniae (Chlamydophila pneumoniae).